Consider the following 513-residue polypeptide: Dye-decolorizing peroxidase msp1 (513 aa).

The first 20 residues, 1–20, serve as a signal peptide directing secretion; the sequence is MKLFSASVFAAIIASHYASA. Residues 21 to 55 constitute a propeptide that is removed on maturation; it reads TAHIRAPNVKPRRTNSLLTAPPQQPPLPSAQQAAS. The tract at residues 33–52 is disordered; the sequence is RTNSLLTAPPQQPPLPSAQQ. Asp-228 functions as the Proton acceptor in the catalytic mechanism. His-365 contacts heme.

Homodimer. Requires heme b as cofactor.

The protein resides in the secreted. It catalyses the reaction Reactive Blue 5 + 2 H2O2 = 2,2'-disulfonyl azobenzene + 3-[(4-amino-6-chloro-1,3,5-triazin-2-yl)amino]benzenesulfonate + phthalate + 2 H2O + 2 H(+). The enzyme catalyses 2 a phenolic donor + H2O2 = 2 a phenolic radical donor + 2 H2O. Manganese-independent peroxidase that is able to convert a large number of compounds, but its physiological substrate is not known. In addition to classic peroxidase substrates (e.g. 2,6-dimethoxyphenol), oxidizes dyes such as Reactive Blue 5. Also degrades beta-carotene. The chain is Dye-decolorizing peroxidase msp1 from Mycetinis scorodonius (Garlic mushroom).